A 414-amino-acid polypeptide reads, in one-letter code: Secernin-1 (414 aa).

The protein belongs to the peptidase C69 family. Secernin subfamily.

The protein resides in the cytoplasm. Functionally, regulates exocytosis in mast cells. Increases both the extent of secretion and the sensitivity of mast cells to stimulation with calcium. This is Secernin-1 (Scrn1) from Mus musculus (Mouse).